The primary structure comprises 646 residues: NADP-dependent malic enzyme 4, chloroplastic (646 aa).

The transit peptide at 1–74 (MISLTPSLFL…LETSAADIVP (74 aa)) directs the protein to the chloroplast. Catalysis depends on Tyr194, which acts as the Proton donor. Arg247 serves as a coordination point for NADP(+). The Proton acceptor role is filled by Lys265. Positions 337, 338, and 361 each coordinate a divalent metal cation. Residues Asp361, 390-406 (LFLGAGEAGTGIAELIA), and Asn502 each bind NADP(+).

This sequence belongs to the malic enzymes family. In terms of assembly, homodimer and homotetramer. The cofactor is Mg(2+). Requires Mn(2+) as cofactor. In terms of tissue distribution, expressed in leaves, stems, flowers and roots, mainly in vascular system. In roots, present in the stele, including the vascular tissue and the pericycle, mainly at emerging lateral roots and at root tips.

The protein localises to the plastid. The protein resides in the chloroplast. The enzyme catalyses (S)-malate + NADP(+) = pyruvate + CO2 + NADPH. It catalyses the reaction oxaloacetate + H(+) = pyruvate + CO2. It participates in photosynthesis; C3 acid pathway. Its function is as follows. The chloroplastic ME isoform decarboxylates malate shuttled from neighboring mesophyll cells. The CO(2) released is then refixed by ribulose-bisphosphate carboxylase. This pathway eliminates the photorespiratory loss of CO(2) that occurs in most plants. The chain is NADP-dependent malic enzyme 4, chloroplastic (NADP-ME4) from Arabidopsis thaliana (Mouse-ear cress).